A 1238-amino-acid chain; its full sequence is uncharacterized protein (1238 aa).

7 disordered regions span residues 22–83, 96–150, 169–250, 264–694, 739–915, 936–955, and 1057–1089; these read LQSA…QEHL, SSRQ…IASP, FEPD…HQML, QLNS…AAMV, TKAA…SVPE, THSA…APHE, and PKIS…QCSS. A compositionally biased stretch (low complexity) spans 35-49; it reads QPPNQQPHQTQQQQQ. A compositionally biased stretch (polar residues) spans 58–72; that stretch reads PSIQNLTTNATPTST. Over residues 73 to 83 the composition is skewed to low complexity; the sequence is QLQQQQQQEHL. Positions 96-110 are enriched in polar residues; the sequence is SSRQNQGAPSGNLSN. Over residues 125 to 145 the composition is skewed to low complexity; it reads SVSGNTNHTGSNSSSNSGSNN. Positions 188–204 are enriched in polar residues; it reads SASSASKLPTHNVQQQH. Composition is skewed to low complexity over residues 272–287, 309–334, and 393–406; these read SYQH…QSHP, PLLT…SSQH, and SNEE…NSSN. Polar residues predominate over residues 433–450; that stretch reads SKPQHPQQAANLNNSCSP. A Phosphoserine modification is found at Ser-453. A compositionally biased stretch (polar residues) spans 463-472; the sequence is PFSTQKQSQT. Basic and acidic residues predominate over residues 523 to 536; sequence TEQHRMQQDDEPPK. Composition is skewed to low complexity over residues 549–570 and 632–641; these read QSNS…SQSS and TTAAVAAPPA. Thr-642 bears the Phosphothreonine mark. Positions 678–688 are enriched in basic and acidic residues; sequence ERISSPEKPAE. Phosphoserine occurs at positions 682, 749, and 753. A compositionally biased stretch (polar residues) spans 755 to 764; it reads IPQSRSTSTP. Ser-793 and Ser-799 each carry phosphoserine. Low complexity predominate over residues 832–860; the sequence is STSAAAAAALAARQLSEAASATKSKPAAG. The span at 861-874 shows a compositional bias: basic residues; that stretch reads AKKKNAGVKGKKGS. Positions 937-947 are enriched in basic and acidic residues; sequence HSAEDVNEKQT. The span at 1071–1089 shows a compositional bias: polar residues; the sequence is DSSISYSDDPNESRSQCSS. A C2HC pre-PHD-type; degenerate zinc finger spans residues 1089–1131; it reads SVDLLDCSTESKFVETFRGMGKTSENGFEVWLHEDCAVWSNDI. Residue Ser-1099 is modified to Phosphoserine. Residues 1151 to 1199 form a PHD-type zinc finger; sequence YQCVLCQQTGASICCFQRCCKAAAHVPCGRSANWSLSEEDRKVYCHLHR.

This is an uncharacterized protein from Drosophila melanogaster (Fruit fly).